Consider the following 514-residue polypeptide: MSKPNNQNQQNNQEPAPEDANELIAQLQAKLDDIVASGKQPYPNTFKRTDYAQDLQAAFEGISKQEIADNDAKGEKTQVNVAGRVMLNRGAFIVIQDMTGRIQLYVARKELDEKTLADIKSLDLGDIVGVSGYIGRSGKGDLYVHIEEIELLTKALRPMPNKFHGLADVEARYRNRHLDLMTNETTRDTFMVRSQVISGIRKFMLNERFMEVETPMMHPIPGGAVARPFVTHHNALDMPLYLRIAPELYLKRLVVGGFEKVFEINRSFRNEGVSTRHNPEFTMIEFYQAYADYHDLMDLTERLFNELATDILGTTEITYQEEAISLKAPFIRLSMSDAIAKYAENFDMNRINDREYLAEYASTTLKQQVKDVFGVGKLQTIIFEETAEHQLRQPTFITEYPAETSPLARRSDDNPEITDRFELFVGGRELANGFSELNDPEDQAERFLGQVAEKDAGDDEAMHFDAEYIEALSYGLPPTAGEGIGIDRLVMLLTDSASIRDVILFPHMRRKLEG.

Residues 1 to 13 are compositionally biased toward low complexity; it reads MSKPNNQNQQNNQ. The disordered stretch occupies residues 1–21; the sequence is MSKPNNQNQQNNQEPAPEDAN. Glu-422 and Glu-429 together coordinate Mg(2+).

This sequence belongs to the class-II aminoacyl-tRNA synthetase family. Homodimer. Mg(2+) serves as cofactor.

It is found in the cytoplasm. It catalyses the reaction tRNA(Lys) + L-lysine + ATP = L-lysyl-tRNA(Lys) + AMP + diphosphate. This is Lysine--tRNA ligase from Psychrobacter cryohalolentis (strain ATCC BAA-1226 / DSM 17306 / VKM B-2378 / K5).